The primary structure comprises 315 residues: Olfactory receptor 3A1 (315 aa).

Topologically, residues 1-28 (MQPESGANGTVIAEFILLGLLEAPGLQP) are extracellular. Asn-8 carries N-linked (GlcNAc...) asparagine glycosylation. Residues 29-52 (VVFVLFLFAYLVTVGGNLSILAAV) traverse the membrane as a helical segment. Over 53–60 (LVEPKLHS) the chain is Cytoplasmic. Residues 61–82 (PMYFFLGNLSVLDVGCISVTVP) form a helical membrane-spanning segment. Topologically, residues 83–103 (SMLSRLLSRKRAVPCGACLTQ) are extracellular. Cysteines 100 and 192 form a disulfide. Residues 104–123 (LFFFHLFVGVDCFLLTAMAY) traverse the membrane as a helical segment. Residues 124-143 (DRFLAICRPLTYSTRMSQTV) lie on the Cytoplasmic side of the membrane. A helical membrane pass occupies residues 144–161 (QRMLVAASWACAFTNALT). Residues 162-199 (HTVAMSTLNFCGPNEVNHFYCDLPQLFQLSCSSTQLNE) are Extracellular-facing. A helical membrane pass occupies residues 200–223 (LLLFAVGFIMAGTPMALIVISYIH). Over 224–240 (VAAAVLRIRSVEGRKKA) the chain is Cytoplasmic. The chain crosses the membrane as a helical span at residues 241–264 (FSTCGSHLTVVAMFYGSGIFNYMR). Residues 265–275 (LGSTKLSDKDK) are Extracellular-facing. The chain crosses the membrane as a helical span at residues 276-295 (AVGIFNTVINPMVNPIIYRF). The Cytoplasmic segment spans residues 296–315 (RNPEVQSAIWRMLTGRRSLA).

Belongs to the G-protein coupled receptor 1 family.

It localises to the cell membrane. Odorant receptor. In Pan troglodytes (Chimpanzee), this protein is Olfactory receptor 3A1 (OR3A1).